Consider the following 341-residue polypeptide: Phosphate acyltransferase (341 aa).

Belongs to the PlsX family. As to quaternary structure, homodimer. Probably interacts with PlsY.

The protein resides in the cytoplasm. The catalysed reaction is a fatty acyl-[ACP] + phosphate = an acyl phosphate + holo-[ACP]. It participates in lipid metabolism; phospholipid metabolism. Its function is as follows. Catalyzes the reversible formation of acyl-phosphate (acyl-PO(4)) from acyl-[acyl-carrier-protein] (acyl-ACP). This enzyme utilizes acyl-ACP as fatty acyl donor, but not acyl-CoA. This is Phosphate acyltransferase from Lacticaseibacillus casei (strain BL23) (Lactobacillus casei).